Reading from the N-terminus, the 52-residue chain is DNA-directed RNA polymerase subunit Rpo12 (52 aa).

Cys13, Cys30, and Cys33 together coordinate Zn(2+).

This sequence belongs to the archaeal Rpo12/eukaryotic RPC10 RNA polymerase subunit family. As to quaternary structure, part of the RNA polymerase complex. The cofactor is Zn(2+).

It is found in the cytoplasm. It catalyses the reaction RNA(n) + a ribonucleoside 5'-triphosphate = RNA(n+1) + diphosphate. Functionally, DNA-dependent RNA polymerase (RNAP) catalyzes the transcription of DNA into RNA using the four ribonucleoside triphosphates as substrates. The sequence is that of DNA-directed RNA polymerase subunit Rpo12 from Pyrobaculum neutrophilum (strain DSM 2338 / JCM 9278 / NBRC 100436 / V24Sta) (Thermoproteus neutrophilus).